A 634-amino-acid chain; its full sequence is GTP-binding protein 4 (634 aa).

Ala2 is modified (N-acetylalanine). Position 103 is an N6-acetyllysine; alternate (Lys103). A Glycyl lysine isopeptide (Lys-Gly) (interchain with G-Cter in SUMO2); alternate cross-link involves residue Lys103. At Ser122 the chain carries Phosphoserine. In terms of domain architecture, OBG-type G spans 169–340; it reads RTLLLCGYPN…VKTEACDRLL (172 aa). GTP contacts are provided by residues 175 to 182, 221 to 225, and 289 to 292; these read GYPNVGKS, DTPGI, and NKCD. Residue Lys332 forms a Glycyl lysine isopeptide (Lys-Gly) (interchain with G-Cter in SUMO2) linkage. Residues Ser468, Ser470, and Ser472 each carry the phosphoserine modification. Residues 494–634 form a disordered region; sequence KILQSKEKNK…KRKAGKKDRR (141 aa). Lys534 is covalently cross-linked (Glycyl lysine isopeptide (Lys-Gly) (interchain with G-Cter in SUMO2)). Residues 544–554 show a composition bias toward basic residues; the sequence is RRSRSVTRKRK. Ser558 carries the post-translational modification Phosphoserine. A compositionally biased stretch (low complexity) spans 560 to 572; it reads PPSSTARSRSCSR. The segment covering 573–585 has biased composition (basic and acidic residues); the sequence is TPRDVSGLRDVKM. Residues 586 to 604 are compositionally biased toward basic residues; that stretch reads VKKAKTMMKKAQKKMNRLG. Over residues 605-618 the composition is skewed to basic and acidic residues; the sequence is KKGEADRHVFDMKP. The span at 619–634 shows a compositional bias: basic residues; that stretch reads KHLLSGKRKAGKKDRR.

This sequence belongs to the TRAFAC class OBG-HflX-like GTPase superfamily. OBG GTPase family. NOG subfamily. In terms of assembly, associates with pre-60S ribosomal particles. Interacts with MINAS-60 (product of an alternative open reading frame of RBM10). In terms of tissue distribution, ubiquitous.

It localises to the nucleus. It is found in the nucleolus. In terms of biological role, involved in the biogenesis of the 60S ribosomal subunit. Acts as TP53 repressor, preventing TP53 stabilization and cell cycle arrest. The sequence is that of GTP-binding protein 4 (Gtpbp4) from Mus musculus (Mouse).